We begin with the raw amino-acid sequence, 396 residues long: Proteasome-activating nucleotidase (396 aa).

Residues 16–57 (VTYLKRRIRQLELQVRMLEADKERLERELSRLRSEMSRLRQP) are a coiled coil. ATP-binding positions include 181 to 186 (GCGKTL) and histidine 320. The tract at residues 394–396 (IYG) is docks into pockets in the proteasome alpha-ring to cause gate opening.

The protein belongs to the AAA ATPase family. Homohexamer. The hexameric complex has a two-ring architecture resembling a top hat that caps the 20S proteasome core at one or both ends. Upon ATP-binding, the C-terminus of PAN interacts with the alpha-rings of the proteasome core by binding to the intersubunit pockets.

The protein resides in the cytoplasm. Its function is as follows. ATPase which is responsible for recognizing, binding, unfolding and translocation of substrate proteins into the archaeal 20S proteasome core particle. Is essential for opening the gate of the 20S proteasome via an interaction with its C-terminus, thereby allowing substrate entry and access to the site of proteolysis. Thus, the C-termini of the proteasomal ATPase function like a 'key in a lock' to induce gate opening and therefore regulate proteolysis. Unfolding activity requires energy from ATP hydrolysis, whereas ATP binding alone promotes ATPase-20S proteasome association which triggers gate opening, and supports translocation of unfolded substrates. The sequence is that of Proteasome-activating nucleotidase from Pyrococcus furiosus (strain ATCC 43587 / DSM 3638 / JCM 8422 / Vc1).